Reading from the N-terminus, the 249-residue chain is Probable transcriptional regulatory protein Sfum_0996 (249 aa).

This sequence belongs to the TACO1 family.

The protein localises to the cytoplasm. In Syntrophobacter fumaroxidans (strain DSM 10017 / MPOB), this protein is Probable transcriptional regulatory protein Sfum_0996.